The primary structure comprises 223 residues: Ubiquitin carboxyl-terminal hydrolase isozyme L1 (223 aa).

Methionine 1 is subject to N-acetylmethionine. Residues 2–221 form the UCH catalytic domain; that stretch reads QLKPMEINPE…VRFSAVALCK (220 aa). Residues 5 to 10 form an interaction with ubiquitin region; that stretch reads PMEINP. Catalysis depends on cysteine 90, which acts as the Nucleophile. Serine 125 bears the Phosphoserine mark. Histidine 161 acts as the Proton donor in catalysis. Residues 211 to 216 are interaction with ubiquitin; the sequence is EVRFSA. Cysteine 220 is lipidated: S-farnesyl cysteine. A propeptide spans 221-223 (removed in mature form); sequence KAA.

This sequence belongs to the peptidase C12 family. Monomer. Homodimer. Interacts with COPS5 and SNCA. O-glycosylated. Expressed in the placenta at all stages of pregnancy. Expression increases as pregnancy progresses.

Its subcellular location is the cytoplasm. It is found in the endoplasmic reticulum membrane. The protein resides in the nucleus. It catalyses the reaction Thiol-dependent hydrolysis of ester, thioester, amide, peptide and isopeptide bonds formed by the C-terminal Gly of ubiquitin (a 76-residue protein attached to proteins as an intracellular targeting signal).. Ubiquitin-protein hydrolase involved both in the processing of ubiquitin precursors and of ubiquitinated proteins. This enzyme is a thiol protease that recognizes and hydrolyzes a peptide bond at the C-terminal glycine of ubiquitin. Also binds to free monoubiquitin and may prevent its degradation in lysosomes. The homodimer may have ATP-independent ubiquitin ligase activity. The sequence is that of Ubiquitin carboxyl-terminal hydrolase isozyme L1 (UCHL1) from Macaca fascicularis (Crab-eating macaque).